A 461-amino-acid polypeptide reads, in one-letter code: 3-deoxy-D-manno-octulosonic acid transferase (461 aa).

The chain crosses the membrane as a helical; Signal-anchor span at residues Met-2–Ile-22. One can recognise an RPE1 insert domain in the interval Ser-47–Tyr-88. Residue Glu-102 is the Proton acceptor of the active site. CMP is bound by residues Pro-306 to Arg-307, Phe-347 to Glu-349, and Asn-372 to Glu-375.

It belongs to the glycosyltransferase group 1 family. Glycosyltransferase 30 subfamily.

The protein localises to the cell inner membrane. The enzyme catalyses lipid IVA (E. coli) + CMP-3-deoxy-beta-D-manno-octulosonate = alpha-Kdo-(2-&gt;6)-lipid IVA (E. coli) + CMP + H(+). Its pathway is bacterial outer membrane biogenesis; LPS core biosynthesis. Its function is as follows. Involved in lipopolysaccharide (LPS) biosynthesis. Catalyzes the transfer of 3-deoxy-D-manno-octulosonate (Kdo) residue(s) from CMP-Kdo to lipid IV(A), the tetraacyldisaccharide-1,4'-bisphosphate precursor of lipid A. This chain is 3-deoxy-D-manno-octulosonic acid transferase (waaA), found in Rickettsia prowazekii (strain Madrid E).